The chain runs to 400 residues: Tryptophan synthase beta chain (400 aa).

K92 is subject to N6-(pyridoxal phosphate)lysine.

This sequence belongs to the TrpB family. As to quaternary structure, tetramer of two alpha and two beta chains. It depends on pyridoxal 5'-phosphate as a cofactor.

The enzyme catalyses (1S,2R)-1-C-(indol-3-yl)glycerol 3-phosphate + L-serine = D-glyceraldehyde 3-phosphate + L-tryptophan + H2O. It functions in the pathway amino-acid biosynthesis; L-tryptophan biosynthesis; L-tryptophan from chorismate: step 5/5. Functionally, the beta subunit is responsible for the synthesis of L-tryptophan from indole and L-serine. The chain is Tryptophan synthase beta chain from Neisseria meningitidis serogroup B (strain ATCC BAA-335 / MC58).